A 23-amino-acid polypeptide reads, in one-letter code: VDFASESXNKRENQQIVDKHNAL.

Positions 1 to 23 are disordered; that stretch reads VDFASESXNKRENQQIVDKHNAL. Over residues 8 to 23 the composition is skewed to basic and acidic residues; it reads XNKRENQQIVDKHNAL.

Belongs to the CRISP family. In terms of processing, contains 8 disulfide bonds. As to expression, expressed by the venom gland.

Its subcellular location is the secreted. The polypeptide is Cysteine-rich venom protein 24 (Naja kaouthia (Monocled cobra)).